The following is a 1032-amino-acid chain: Baseplate wedge protein gp7 (1032 aa).

Positions 1012-1032 (LKDNIGNPRDPENPTQVKIDE) are disordered.

It belongs to the T4likevirus baseplate wedge protein gp7 family. In terms of assembly, heterotrimer with gp6; assembles as a (gp6)2-gp7 heterotrimeric molecule. The (gp6)2-gp7 heterotrimeric molecule further interacts with gp25 and gp53. The gp25-(gp6)2-gp7 module is involved in sheath contraction. Interacts with gp8. Binds to gp10 homotrimer; disulfide-linked. Heteromultimer with gp10; a gp10 molecule is disulfide-linked to gp7 and the other two remaining gp10 molecules form a disulfide bond. Part of the baseplate macromolecular complex which consists of gp5, gp5.4, gp27 (central spike complex); gp6, gp25, gp53 (inner baseplate); gp7, gp8 (intermediate baseplate); gp9, gp10, gp11, gp12 (peripheral); gp48 and gp54 (proximal region of the tail tube).

The protein localises to the virion. Its function is as follows. Intermediate/inner baseplate protein. The gp25-(gp6)2-gp7 module is involved in sheath contraction. Involved in the tail assembly. The protein is Baseplate wedge protein gp7 (7) of Enterobacteria phage T4 (Bacteriophage T4).